Consider the following 449-residue polypeptide: Bifunctional protein GlmU (449 aa).

The interval 1 to 226 (MNNIHAIILA…KFEVLGVNDK (226 aa)) is pyrophosphorylase. UDP-N-acetyl-alpha-D-glucosamine-binding positions include 9 to 12 (LAAG), K23, Q73, 78 to 79 (GT), 100 to 102 (YGD), G137, E151, N166, and N224. D102 serves as a coordination point for Mg(2+). Mg(2+) is bound at residue N224. A linker region spans residues 227–247 (VQLAELERLFQKDQAIQFMKQ). An N-acetyltransferase region spans residues 248 to 449 (GLGLKDPTRF…QKNLKYRSKK (202 aa)). UDP-N-acetyl-alpha-D-glucosamine contacts are provided by R330 and K348. Residue H360 is the Proton acceptor of the active site. Y363 and N374 together coordinate UDP-N-acetyl-alpha-D-glucosamine. Acetyl-CoA-binding positions include A377, 383-384 (NY), S402, A420, and R437.

In the N-terminal section; belongs to the N-acetylglucosamine-1-phosphate uridyltransferase family. This sequence in the C-terminal section; belongs to the transferase hexapeptide repeat family. In terms of assembly, homotrimer. Requires Mg(2+) as cofactor.

The protein localises to the cytoplasm. It catalyses the reaction alpha-D-glucosamine 1-phosphate + acetyl-CoA = N-acetyl-alpha-D-glucosamine 1-phosphate + CoA + H(+). The catalysed reaction is N-acetyl-alpha-D-glucosamine 1-phosphate + UTP + H(+) = UDP-N-acetyl-alpha-D-glucosamine + diphosphate. It participates in nucleotide-sugar biosynthesis; UDP-N-acetyl-alpha-D-glucosamine biosynthesis; N-acetyl-alpha-D-glucosamine 1-phosphate from alpha-D-glucosamine 6-phosphate (route II): step 2/2. It functions in the pathway nucleotide-sugar biosynthesis; UDP-N-acetyl-alpha-D-glucosamine biosynthesis; UDP-N-acetyl-alpha-D-glucosamine from N-acetyl-alpha-D-glucosamine 1-phosphate: step 1/1. The protein operates within bacterial outer membrane biogenesis; LPS lipid A biosynthesis. Catalyzes the last two sequential reactions in the de novo biosynthetic pathway for UDP-N-acetylglucosamine (UDP-GlcNAc). The C-terminal domain catalyzes the transfer of acetyl group from acetyl coenzyme A to glucosamine-1-phosphate (GlcN-1-P) to produce N-acetylglucosamine-1-phosphate (GlcNAc-1-P), which is converted into UDP-GlcNAc by the transfer of uridine 5-monophosphate (from uridine 5-triphosphate), a reaction catalyzed by the N-terminal domain. The chain is Bifunctional protein GlmU from Vesicomyosocius okutanii subsp. Calyptogena okutanii (strain HA).